The primary structure comprises 427 residues: Glutamate-1-semialdehyde 2,1-aminomutase (427 aa).

K268 is subject to N6-(pyridoxal phosphate)lysine.

Belongs to the class-III pyridoxal-phosphate-dependent aminotransferase family. HemL subfamily. The cofactor is pyridoxal 5'-phosphate.

The protein resides in the cytoplasm. The catalysed reaction is (S)-4-amino-5-oxopentanoate = 5-aminolevulinate. The protein operates within porphyrin-containing compound metabolism; protoporphyrin-IX biosynthesis; 5-aminolevulinate from L-glutamyl-tRNA(Glu): step 2/2. This chain is Glutamate-1-semialdehyde 2,1-aminomutase, found in Methanococcus maripaludis (strain C6 / ATCC BAA-1332).